The following is a 498-amino-acid chain: MRINLTTSDPEVSIREKKNLGRIAQIIGPVLDVAFPPGKMPNIYNALVVKGRDTLGQEINVTCEVQQLLGNNRVRAVAMSATEGLKRGMDVVDMGNPLSVPVGGATLGRIFNVLGEPVDNLGPVDTRTTSPIHKSAPAFIQLDTKLSIFETGIKVVDLLAPYRRGGKIGLFGGAGVGKTVLIMELINNIAKAHGGVSVFGGVGERTREGNDLYMEMKESGVINEQNLAESKVALVYGQMNEPPGARMRVGLTALTMAEYFRDVNEQDVLLFIDNIFRFVQAGSEVSALLGRMPSAVGYQPTLSTEMGTLQERITSTKKGSITSIQAVYVPADDLTDPAPATTFAHLDATTVLSRGLAAKGIYPAVDPLDSTSTMLQPRIVGEEHYETAQQVKQTLQRYKELQDIIAILGLDELSEEDRLTVARARKIERFLSQPFFVAEVFTGSPGKYVGLAETIRGFKLILSGEFDSLPEQAFYLVGNIDEATAKATNLEMESKLKK.

The residue at position 6 (threonine 6) is a Phosphothreonine. Serine 13 carries the phosphoserine modification. Residue 172-179 participates in ATP binding; that stretch reads GGAGVGKT.

The protein belongs to the ATPase alpha/beta chains family. As to quaternary structure, F-type ATPases have 2 components, CF(1) - the catalytic core - and CF(0) - the membrane proton channel. CF(1) has five subunits: alpha(3), beta(3), gamma(1), delta(1), epsilon(1). CF(0) has four main subunits: a(1), b(1), b'(1) and c(9-12).

It localises to the plastid. The protein resides in the chloroplast thylakoid membrane. It carries out the reaction ATP + H2O + 4 H(+)(in) = ADP + phosphate + 5 H(+)(out). Produces ATP from ADP in the presence of a proton gradient across the membrane. The catalytic sites are hosted primarily by the beta subunits. The protein is ATP synthase subunit beta, chloroplastic of Barbarea verna (Land cress).